The sequence spans 612 residues: Probable exonuclease subunit 2 (612 aa).

An ATP-binding site is contributed by 35 to 42; that stretch reads GGNGLGKS. 2 coiled-coil regions span residues 163–193 and 288–459; these read NQEQYKEMSETIKADRKEIANTLNNLQGQMA and SRAS…VADL.

To phage T4 protein GP46. In terms of assembly, could consist of two subunits: D13 and D12.

In terms of biological role, possible exonuclease that may play a role in viral genome replication, DNA recombination, and host DNA degradation. The protein is Probable exonuclease subunit 2 (D13) of Escherichia phage T5 (Enterobacteria phage T5).